The sequence spans 356 residues: Heme A synthase (356 aa).

The next 5 membrane-spanning stretches (helical) occupy residues 24–44, 106–126, 139–159, 174–194, and 214–234; these read IAIWLLICCALVFAMIVVGGV, FHRLLGRLIGLVYFIPFVYFM, LLGIFALGALQGLMGWYMVMS, AHLGLAFVIYAAMFWVATGLI, and AWMLTGLIFVMVLSGGLVAGI. His276 is a heme binding site. The next 3 membrane-spanning stretches (helical) occupy residues 278–298, 309–329, and 331–351; these read LIAWLLIFSIPWFWFKAKQLS, LLLLMLLIQAGLGITTLLLSV, and LTFATAHQAGAVLLFTAALWV. Residue His337 coordinates heme.

Belongs to the COX15/CtaA family. Type 2 subfamily. Interacts with CtaB. Heme b serves as cofactor.

The protein localises to the cell membrane. The enzyme catalyses Fe(II)-heme o + 2 A + H2O = Fe(II)-heme a + 2 AH2. Its pathway is porphyrin-containing compound metabolism; heme A biosynthesis; heme A from heme O: step 1/1. Catalyzes the conversion of heme O to heme A by two successive hydroxylations of the methyl group at C8. The first hydroxylation forms heme I, the second hydroxylation results in an unstable dihydroxymethyl group, which spontaneously dehydrates, resulting in the formyl group of heme A. In Nitrosomonas eutropha (strain DSM 101675 / C91 / Nm57), this protein is Heme A synthase.